We begin with the raw amino-acid sequence, 386 residues long: MAPPHNYLAVIKVVGIGGGGVNAVNRMIEQGLKGVEFIAINTDAQALLMSDADVKLDVGRDSTRGLGAGADPEVGRXAAEDAKDDIEELLRGADMVFVTAGEGGGTGTGGAPVVASIARKLGALTVGVVTRPFSFEGKRRSNQAENGIQALRESCDTLIVIPNDRLLQMGDAAVSLMDAFRSADEVLLNGVXGITDLITTPGLINVDFADVKGVMSGAGTALMGIGSARGDGRALKAAEIAINSPLLEASMEGAQGVLLSVAGGSDLGLFEINEAASLVQDAAHPEANIIFGTVIDDSLGDEVRVTVIAAGFDSAGPSRKPVVSPSAAQTQPIASARAGKVTTSLFEPTDAVSVPAHTNGATVSVGGDGDGGIADDVVDVPPLMRR.

Residues 18–22 (GGGVN), 105–107 (GTG), glutamate 136, arginine 140, and aspartate 184 each bind GTP.

The protein belongs to the FtsZ family. Homodimer. Polymerizes to form a dynamic ring structure in a strictly GTP-dependent manner. Interacts directly with several other division proteins.

The protein resides in the cytoplasm. Its function is as follows. Essential cell division protein that forms a contractile ring structure (Z ring) at the future cell division site. The regulation of the ring assembly controls the timing and the location of cell division. One of the functions of the FtsZ ring is to recruit other cell division proteins to the septum to produce a new cell wall between the dividing cells. Binds GTP and shows GTPase activity. In Mycobacterium kansasii, this protein is Cell division protein FtsZ.